Reading from the N-terminus, the 470-residue chain is Cysteine--tRNA ligase (470 aa).

Cys29 is a binding site for Zn(2+). A 'HIGH' region motif is present at residues 31-41; sequence PTVYNYAHIGN. Zn(2+) is bound by residues Cys211, His236, and Glu240. Residues 273–277 carry the 'KMSKS' region motif; that stretch reads KMSKS. Position 276 (Lys276) interacts with ATP.

This sequence belongs to the class-I aminoacyl-tRNA synthetase family. Monomer. It depends on Zn(2+) as a cofactor.

Its subcellular location is the cytoplasm. It carries out the reaction tRNA(Cys) + L-cysteine + ATP = L-cysteinyl-tRNA(Cys) + AMP + diphosphate. This is Cysteine--tRNA ligase from Phenylobacterium zucineum (strain HLK1).